A 450-amino-acid chain; its full sequence is uncharacterized protein (450 aa).

A TRAM domain is found at 1 to 58 (MQKNQIVDLEITDLSYEAMGVAHLDGMTVFVNNALPGEIVSAKLLKVKKNFAFAKIEK). The S-adenosyl-L-methionine site is built by Gln280, Tyr309, Glu330, and Asp378. The active-site Nucleophile is the Cys405.

This sequence belongs to the class I-like SAM-binding methyltransferase superfamily. RNA M5U methyltransferase family.

This is an uncharacterized protein from Lactobacillus johnsonii (strain CNCM I-12250 / La1 / NCC 533).